The sequence spans 903 residues: Disintegrin and metalloproteinase domain-containing protein 12 (903 aa).

A signal peptide spans 1-31; that stretch reads MAERPARRAPPARALLLALAGALLAPRAARG. Positions 32–205 are excised as a propeptide; it reads MSLWDQRGTY…SQMRARRHKR (174 aa). Asn-112, Asn-147, and Asn-157 each carry an N-linked (GlcNAc...) asparagine glycan. The Cysteine switch motif lies at 175–182; the sequence is GLCGSQHN. Cys-177 is a binding site for Zn(2+). Asn-182 and Asn-185 each carry an N-linked (GlcNAc...) asparagine glycan. At 206 to 706 the chain is on the extracellular side; sequence ETLKMTKYVE…GPIRQADNQG (501 aa). Residues 212-414 form the Peptidase M12B domain; the sequence is KYVELVIVAD…GMGMCLFNLP (203 aa). Disulfide bonds link Cys-323–Cys-409, Cys-365–Cys-393, and Cys-367–Cys-376. His-348 lines the Zn(2+) pocket. Glu-349 is an active-site residue. His-352 and His-358 together coordinate Zn(2+). One can recognise a Disintegrin domain in the interval 422-508; the sequence is GRKCGNGYVE…HCPANVYLHD (87 aa). Asn-450 carries an N-linked (GlcNAc...) asparagine glycan. Residues Cys-480 and Cys-500 are joined by a disulfide bond. Asn-649 carries an N-linked (GlcNAc...) asparagine glycan. Residues 654–686 form the EGF-like domain; it reads GVHKCAMQCHGRGVCNNRKNCHCEAHWAPPFCD. Disulfide bonds link Cys-658–Cys-668, Cys-662–Cys-674, and Cys-676–Cys-685. Residues 707–727 form a helical membrane-spanning segment; it reads LTVGILVSILCLLAAGFVVYL. Residues 728–903 are Cytoplasmic-facing; it reads KRKTLMRLLF…PRPSHNAYIK (176 aa). Disordered regions lie at residues 753-790 and 819-903; these read SRTP…HSLK and HQTP…AYIK. Short sequence motifs (SH3-binding; class II) lie at residues 824 to 830 and 846 to 852; these read APSGPAR and KPSPPQK. 3 short sequence motifs (SH3-binding; class I) span residues 830-837, 852-858, and 881-887; these read RPLPASPA, KPLPADP, and RPAPIRP. Pro residues predominate over residues 847-856; the sequence is PSPPQKPLPA. Phosphotyrosine; by SRC is present on Tyr-901.

In terms of assembly, interacts with alpha-actinin-2 and with syndecans. Interacts with SH3PXD2A. Interacts with FST3. Interacts with RACK1; the interaction is required for PKC-dependent translocation of ADAM12 to the cell membrane. The cofactor is Zn(2+). Post-translationally, the precursor is cleaved by a furin endopeptidase. Expressed during early developing mesenchymal cells that give rise to skeletal muscle, bones and visceral organs. Not expressed in adult normal muscle but expressed in regenerating muscle.

Its subcellular location is the membrane. In terms of biological role, involved in skeletal muscle regeneration, specifically at the onset of cell fusion. Also involved in macrophage-derived giant cells (MGC) and osteoclast formation from mononuclear precursors. This chain is Disintegrin and metalloproteinase domain-containing protein 12 (Adam12), found in Mus musculus (Mouse).